The primary structure comprises 344 residues: Interactor of constitutive active ROPs 1 (344 aa).

Disordered stretches follow at residues 1–74 (MPRP…ESQL), 92–139 (EAVK…KETD), 186–218 (HESLGKENESLKNQLSDSASEISNVKANEDEMV), and 307–344 (FMDPPGMADDYDDGLGSGKRKSSGMKMFGELWRKKGQK). Residues 19 to 29 (SSSSTSDSNHS) show a composition bias toward low complexity. The stretch at 60–108 (QKKLGGRISDLESQLGQAQEELRLLKEQLANAEAVKKQAQDELHKKSKK) forms a coiled coil. Basic and acidic residues-rich tracts occupy residues 93 to 103 (AVKKQAQDELH), 114 to 139 (RVEESATEAERIDRDEIPGDVQKETD), and 186 to 195 (HESLGKENES). The stretch at 145-273 (VEKIAVEEEE…EQWRKAADAA (129 aa)) forms a coiled coil. Positions 196-211 (LKNQLSDSASEISNVK) are enriched in polar residues.

The protein belongs to the ICR family. Homooligomer. Interacts with ARAC3, ARAC4, ARAC8, ARAC11 and SEC3A, but not with ICR2 or EXO70A1. As to expression, expressed in mature and germinating pollen. Expressed throughout the embryo but not in the hypophysis and quiescent center (QC). In roots, absent from the QC and the stem cells.

The protein localises to the cell membrane. Its subcellular location is the nucleus. Acts as a scaffold, mediating interaction of ROPs with different proteins. Required for primary and adventitious root maintenance, but not for their formation. Promotes the stabilization of ARAC11 on the plasma membrane of the pollen tube initiation site but not the activation of ARAC11. Regulates directionality of polar auxin transport, and is required for the formation of a stable auxin maximum and tip localized auxin gradient during embryogenesis, organogenesis, and meristem activity. Involved in exocytosis and in the recycling of PIN proteins back to the plasma membrane. This chain is Interactor of constitutive active ROPs 1 (ICR1), found in Arabidopsis thaliana (Mouse-ear cress).